The sequence spans 482 residues: tRNA sulfurtransferase (482 aa).

Residues 61-165 enclose the THUMP domain; the sequence is LAIRDALTRI…DDRLLLIKGR (105 aa). Residues 183-184, Lys-265, Gly-287, and Gln-296 contribute to the ATP site; that span reads LI. Cys-344 and Cys-456 are disulfide-bonded. One can recognise a Rhodanese domain in the interval 404–482; the sequence is FGPNDVILDI…GFANVKVYRP (79 aa). Cys-456 acts as the Cysteine persulfide intermediate in catalysis.

This sequence belongs to the ThiI family.

Its subcellular location is the cytoplasm. It catalyses the reaction [ThiI sulfur-carrier protein]-S-sulfanyl-L-cysteine + a uridine in tRNA + 2 reduced [2Fe-2S]-[ferredoxin] + ATP + H(+) = [ThiI sulfur-carrier protein]-L-cysteine + a 4-thiouridine in tRNA + 2 oxidized [2Fe-2S]-[ferredoxin] + AMP + diphosphate. The enzyme catalyses [ThiS sulfur-carrier protein]-C-terminal Gly-Gly-AMP + S-sulfanyl-L-cysteinyl-[cysteine desulfurase] + AH2 = [ThiS sulfur-carrier protein]-C-terminal-Gly-aminoethanethioate + L-cysteinyl-[cysteine desulfurase] + A + AMP + 2 H(+). It functions in the pathway cofactor biosynthesis; thiamine diphosphate biosynthesis. Catalyzes the ATP-dependent transfer of a sulfur to tRNA to produce 4-thiouridine in position 8 of tRNAs, which functions as a near-UV photosensor. Also catalyzes the transfer of sulfur to the sulfur carrier protein ThiS, forming ThiS-thiocarboxylate. This is a step in the synthesis of thiazole, in the thiamine biosynthesis pathway. The sulfur is donated as persulfide by IscS. The polypeptide is tRNA sulfurtransferase (Salmonella heidelberg (strain SL476)).